The chain runs to 304 residues: UTP--glucose-1-phosphate uridylyltransferase 1 (304 aa).

Belongs to the UDPGP type 2 family.

It carries out the reaction alpha-D-glucose 1-phosphate + UTP + H(+) = UDP-alpha-D-glucose + diphosphate. It participates in carbohydrate metabolism; nucleotide-sugar metabolism. The chain is UTP--glucose-1-phosphate uridylyltransferase 1 (hasC1) from Streptococcus pyogenes serotype M3 (strain ATCC BAA-595 / MGAS315).